The sequence spans 66 residues: Protein KleD (66 aa).

Positions 33–52 form a DNA-binding region, H-T-H motif; sequence VAVRSGNEWQQVTKWVEPAR.

In Escherichia coli, this protein is Protein KleD (kleD).